The sequence spans 432 residues: Enolase (432 aa).

Gln163 contributes to the (2R)-2-phosphoglycerate binding site. Glu205 serves as the catalytic Proton donor. Mg(2+) is bound by residues Asp242, Glu289, and Asp316. (2R)-2-phosphoglycerate is bound by residues Lys341, Arg370, Ser371, and Lys392. Lys341 serves as the catalytic Proton acceptor.

This sequence belongs to the enolase family. Mg(2+) is required as a cofactor. In terms of processing, probably phosphorylated.

The protein resides in the cytoplasm. It localises to the secreted. The protein localises to the cell surface. The enzyme catalyses (2R)-2-phosphoglycerate = phosphoenolpyruvate + H2O. The protein operates within carbohydrate degradation; glycolysis; pyruvate from D-glyceraldehyde 3-phosphate: step 4/5. Functionally, catalyzes the reversible conversion of 2-phosphoglycerate (2-PG) into phosphoenolpyruvate (PEP). It is essential for the degradation of carbohydrates via glycolysis. Its function is as follows. 'Moonlights' as a plasminogen receptor. Binds plasminogen and human salivary mucin MG2 when expressed on the bacterial cell surface, potentially allowing the bacterium to acquire surface-associated proteolytic activity that may help the dissemination through oral tissues and entrance into the blood stream. This chain is Enolase, found in Streptococcus mutans serotype c (strain ATCC 700610 / UA159).